Consider the following 313-residue polypeptide: ADP-L-glycero-D-manno-heptose-6-epimerase (313 aa).

Residues 10–11, 31–32, Arg38, Lys53, 75–79, and Asn92 each bind NADP(+); these read FI, DD, and EGACS. Tyr139 functions as the Proton acceptor in the catalytic mechanism. Lys143 lines the NADP(+) pocket. Asn168 is a binding site for substrate. NADP(+)-binding residues include Val169 and Lys177. Residue Lys177 is the Proton acceptor of the active site. Residues Lys179, His186, 200–203, Arg213, and Tyr277 each bind substrate; that span reads FEGW.

This sequence belongs to the NAD(P)-dependent epimerase/dehydratase family. HldD subfamily. As to quaternary structure, homopentamer. The cofactor is NADP(+).

It carries out the reaction ADP-D-glycero-beta-D-manno-heptose = ADP-L-glycero-beta-D-manno-heptose. Its pathway is nucleotide-sugar biosynthesis; ADP-L-glycero-beta-D-manno-heptose biosynthesis; ADP-L-glycero-beta-D-manno-heptose from D-glycero-beta-D-manno-heptose 7-phosphate: step 4/4. Catalyzes the interconversion between ADP-D-glycero-beta-D-manno-heptose and ADP-L-glycero-beta-D-manno-heptose via an epimerization at carbon 6 of the heptose. This chain is ADP-L-glycero-D-manno-heptose-6-epimerase, found in Marinobacter nauticus (strain ATCC 700491 / DSM 11845 / VT8) (Marinobacter aquaeolei).